A 336-amino-acid polypeptide reads, in one-letter code: Atypical chemokine receptor 1 (336 aa).

The Extracellular portion of the chain corresponds to Met-1–Pro-63. 4 N-linked (GlcNAc...) asparagine glycosylation sites follow: Asn-16, Asn-27, Asn-33, and Asn-58. Disulfide bonds link Cys-51–Cys-276 and Cys-129–Cys-195. The chain crosses the membrane as a helical span at residues Phe-64–Phe-84. Residues Arg-85–Gly-95 are Cytoplasmic-facing. The helical transmembrane segment at Trp-96–Leu-116 threads the bilayer. The Extracellular segment spans residues Ala-117–Cys-129. A helical membrane pass occupies residues Ser-130–Leu-153. Residues Gly-154–Thr-166 lie on the Cytoplasmic side of the membrane. The chain crosses the membrane as a helical span at residues Leu-167–Ala-187. Residues Ser-188 to Gln-207 are Extracellular-facing. The helical transmembrane segment at Ala-208–Ala-228 threads the bilayer. Topologically, residues Lys-229–Asn-244 are cytoplasmic. The chain crosses the membrane as a helical span at residues Ile-245–Leu-265. The Extracellular segment spans residues Val-266–Asn-287. A helical transmembrane segment spans residues Leu-288–Cys-308. The Cytoplasmic portion of the chain corresponds to His-309–Ser-336.

Belongs to the G-protein coupled receptor 1 family. Atypical chemokine receptor subfamily.

The protein localises to the early endosome. Its subcellular location is the recycling endosome. It localises to the membrane. In terms of biological role, atypical chemokine receptor that controls chemokine levels and localization via high-affinity chemokine binding that is uncoupled from classic ligand-driven signal transduction cascades, resulting instead in chemokine sequestration, degradation, or transcytosis. Also known as interceptor (internalizing receptor) or chemokine-scavenging receptor or chemokine decoy receptor. Has a promiscuous chemokine-binding profile, interacting with inflammatory chemokines of both the CXC and the CC subfamilies but not with homeostatic chemokines. Acts as a receptor for chemokines including CCL2, CCL5, CCL7, CCL11, CCL13, CCL14, CCL17, CXCL5, CXCL6, IL8/CXCL8, CXCL11, GRO, RANTES, MCP-1 and TARC. May regulate chemokine bioavailability and, consequently, leukocyte recruitment through two distinct mechanisms: when expressed in endothelial cells, it sustains the abluminal to luminal transcytosis of tissue-derived chemokines and their subsequent presentation to circulating leukocytes; when expressed in erythrocytes, serves as blood reservoir of cognate chemokines but also as a chemokine sink, buffering potential surges in plasma chemokine levels. The chain is Atypical chemokine receptor 1 (ACKR1) from Saimiri boliviensis boliviensis (Bolivian squirrel monkey).